A 22-amino-acid polypeptide reads, in one-letter code: Thylakoid lumenal 11 kDa protein (22 aa).

Residues 1-22 (FKGGGPYGQGVTRGQDLSGKDF) are disordered.

To A.thaliana At2g44920.

The protein localises to the plastid. It localises to the chloroplast thylakoid lumen. The polypeptide is Thylakoid lumenal 11 kDa protein (Spinacia oleracea (Spinach)).